Here is a 910-residue protein sequence, read N- to C-terminus: Auxilin (910 aa).

Repeat copies occupy residues 33–36 (NLKD), 37–40 (NLKD), and 41–44 (TLKD). Positions 33 to 44 (NLKDNLKDTLKD) are 3 X 4 AA approximate tandem repeats. The 168-residue stretch at 52–219 (SVTSYTKGDL…GYMCDLLADK (168 aa)) folds into the Phosphatase tensin-type domain. Serine 109 is modified (phosphoserine). Catalysis depends on cysteine 161, which acts as the Phosphocysteine intermediate. One can recognise a C2 tensin-type domain in the interval 225-363 (FKPLTIKSIT…FQVTLDVELQ (139 aa)). The short motif at 406-414 (PIDIPPDNP) is the SH3-binding element. Residues 448–772 (QESEQSDDEL…RGKAAANLEG (325 aa)) are disordered. Serine 450, serine 453, serine 560, and serine 567 each carry phosphoserine. Over residues 547–569 (PSGPTSTQSTPRRSATSTSASPT) the composition is skewed to low complexity. Over residues 596–626 (FLNTASASSDPFLQPTRSPSPTVHASSTPAV) the composition is skewed to polar residues. Low complexity predominate over residues 651–666 (SAATSPTGSSHGTPTH). Residues 715–725 (MGGGWQQGGGY) are compositionally biased toward gly residues. Positions 732–758 (SKPQSSMPHSSPQNRPNYNVSFSSMPG) are enriched in polar residues. The 65-residue stretch at 846–910 (TKWKPVGMAD…FENQGQKPLY (65 aa)) folds into the J domain.

Forms a complex composed of HSPA8, CLTC and DNAJC6. Interacts with HSPA8/HSC70 in an ATP-dependent manner; this interaction stimulates the HSPA8's ATPase activity. Interacts with CLTC; this interaction produces a local change in heavy-chain contacts, creating a detectable global distortion of the clathrin coat. Interacts with AP2A2. Interacts with DNM1(GTP-bound form); this interaction allows clathrin-coated vesicle (CCV) formation at the plasma membrane. The N-terminus is blocked. Post-translationally, phosphorylation at Ser-567 modulates its ability to bind CLTC and therefore the synaptic vesicle endocytosis (SVE). As to expression, brain.

Its subcellular location is the cytoplasmic vesicle. The protein localises to the clathrin-coated vesicle. Functionally, may act as a protein phosphatase and/or a lipid phosphatase. Co-chaperone that recruits HSPA8/HSC70 to clathrin-coated vesicles (CCVs) and promotes the ATP-dependent dissociation of clathrin from CCVs and participates in clathrin-mediated endocytosis of synaptic vesicles and their recycling and also in intracellular trafficking. Firstly, binds tightly to the clathrin cages, at a ratio of one DNAJC6 per clathrin triskelion. The HSPA8:ATP complex then binds to the clathrin-auxilin cage, initially at a ratio of one HSPA8 per triskelion leading to ATP hydrolysis stimulation and causing a conformational change in the HSPA8. This cycle is repeated three times to drive to a complex containing the clathrin-auxilin cage associated to three HSPA8:ADP complex. The ATP hydrolysis of the third HSPA8:ATP complex leads to a concerted dismantling of the cage into component triskelia. Then, dissociates from the released triskelia and be recycled to initiate another cycle of HSPA8's recruitment. Also acts during the early steps of clathrin-coated vesicle (CCV) formation through its interaction with the GTP bound form of DNM1. The sequence is that of Auxilin from Bos taurus (Bovine).